We begin with the raw amino-acid sequence, 404 residues long: Zinc metalloprotease Rip1 (404 aa).

Residues 1-21 form a helical membrane-spanning segment; the sequence is MMFVTGIVLFALAILISVALH. His21 contacts Zn(2+). Glu22 is an active-site residue. Position 25 (His25) interacts with Zn(2+). A helical transmembrane segment spans residues 104–124; that stretch reads PGMNLAICLVLIYAIALVWGL. A PDZ domain is found at 121-203; that stretch reads VWGLPNLHPP…SVPIVVERDG (83 aa). Asp202 is a binding site for Zn(2+). A run of 2 helical transmembrane segments spans residues 313–333 and 373–393; these read LWVAFWFFLAQLNLILAAINL and LLPATYVVLVLVVGYMLLTVT.

The protein belongs to the peptidase M50B family. Requires Zn(2+) as cofactor.

Its subcellular location is the cell membrane. Functionally, a probable site-2 protease (S2P) that cleaves type-2 transmembrane proteins within their membrane-spanning domains. Degrades anti-sigma factors RskA, RslA and RsmA, releasing sigma factors SigK, SigL and SigM from the cellular membrane, activating signaling pathways. Does not act on RsdA. Regulates the composition of extractable mycolic acids in the cell envelope in response to changes in membrane fluidity. Mediates transcriptional regulation of mycolic acid biosynthetic genes in response to detergent. Probably also cleaves PbpB (PBP3, FtsI); this cleavage is inhibited by Wag31-PbpBI interaction. In terms of biological role, regulated intramembrane proteolysis (RIP) occurs when an extracytoplasmic signal (possibly oxidative stress) triggers a concerted proteolytic cascade to transmit information and elicit cellular responses. The membrane-spanning regulatory substrate protein (includes anti-sigma factors RskA, RslA, RsmA, and PbpB) is first cut extracytoplasmically (site-1 protease, S1P), then within the membrane itself (site-2 protease, S2P, this entry), while cytoplasmic proteases finish degrading the regulatory protein, liberating the effector protein (ECF sigma factors SigK, SigL and SigM). The protein is Zinc metalloprotease Rip1 (rip1) of Mycobacterium tuberculosis (strain ATCC 35801 / TMC 107 / Erdman).